A 240-amino-acid chain; its full sequence is E3 ubiquitin-protein ligase LubX (240 aa).

U-box domains are found at residues 30-103 and 125-198; these read TTPT…QTNY and EIPD…RKRE.

In terms of processing, ubiquitinated in the presence of host E1 ubiquitin-activating enzyme, E2 ubiquitin-conjugating enzyme and ubiquitin.

The protein localises to the secreted. The protein resides in the host cell. It carries out the reaction S-ubiquitinyl-[E2 ubiquitin-conjugating enzyme]-L-cysteine + [acceptor protein]-L-lysine = [E2 ubiquitin-conjugating enzyme]-L-cysteine + N(6)-ubiquitinyl-[acceptor protein]-L-lysine.. Functionally, effector proteins function to alter host cell physiology and promote bacterial survival in host tissues. This protein is an E3 ubiquitin ligase that interferes with host's ubiquitination pathway. This chain is E3 ubiquitin-protein ligase LubX (lubX), found in Legionella pneumophila (strain Paris).